The following is a 334-amino-acid chain: Glyceraldehyde-3-phosphate dehydrogenase (334 aa).

NAD(+)-binding positions include 12-13 (RI), aspartate 35, arginine 79, and serine 121. D-glyceraldehyde 3-phosphate-binding positions include 152–154 (SCT), threonine 183, arginine 198, 211–212 (TG), and arginine 234. The active-site Nucleophile is cysteine 153. Asparagine 315 lines the NAD(+) pocket.

This sequence belongs to the glyceraldehyde-3-phosphate dehydrogenase family. In terms of assembly, homotetramer.

Its subcellular location is the cytoplasm. It carries out the reaction D-glyceraldehyde 3-phosphate + phosphate + NAD(+) = (2R)-3-phospho-glyceroyl phosphate + NADH + H(+). The protein operates within carbohydrate degradation; glycolysis; pyruvate from D-glyceraldehyde 3-phosphate: step 1/5. Functionally, catalyzes the oxidative phosphorylation of glyceraldehyde 3-phosphate (G3P) to 1,3-bisphosphoglycerate (BPG) using the cofactor NAD. The first reaction step involves the formation of a hemiacetal intermediate between G3P and a cysteine residue, and this hemiacetal intermediate is then oxidized to a thioester, with concomitant reduction of NAD to NADH. The reduced NADH is then exchanged with the second NAD, and the thioester is attacked by a nucleophilic inorganic phosphate to produce BPG. The sequence is that of Glyceraldehyde-3-phosphate dehydrogenase (gap) from Corynebacterium glutamicum (strain ATCC 13032 / DSM 20300 / JCM 1318 / BCRC 11384 / CCUG 27702 / LMG 3730 / NBRC 12168 / NCIMB 10025 / NRRL B-2784 / 534).